The chain runs to 396 residues: Deoxyuridine 5'-triphosphate nucleotidohydrolase (396 aa).

Substrate contacts are provided by residues 280 to 282 (RSS) and 380 to 381 (FG).

The protein belongs to the dUTPase family. Requires Mg(2+) as cofactor.

It carries out the reaction dUTP + H2O = dUMP + diphosphate + H(+). In terms of biological role, involved in nucleotide metabolism: produces dUMP, the immediate precursor of thymidine nucleotides and decreases the intracellular concentration of dUTP to avoid uracil incorporation into viral DNA. This is Deoxyuridine 5'-triphosphate nucleotidohydrolase from Homo sapiens (Human).